A 337-amino-acid polypeptide reads, in one-letter code: Primase homolog protein (337 aa).

Positions 205 to 304 (SEIIIVEGEP…WLVKWPKKSE (100 aa)) constitute a Toprim domain. Positions 211, 273, and 275 each coordinate Mg(2+).

Mg(2+) serves as cofactor.

Functionally, may act as a DNA primase. The polypeptide is Primase homolog protein (Arabidopsis thaliana (Mouse-ear cress)).